The chain runs to 672 residues: DNA ligase (672 aa).

Residues 34 to 38, 83 to 84, and E117 each bind NAD(+); these read DAEYD and SL. K119 functions as the N6-AMP-lysine intermediate in the catalytic mechanism. 4 residues coordinate NAD(+): R140, E177, K293, and K317. Residues C411, C414, C429, and C434 each coordinate Zn(2+). The BRCT domain occupies 591–672; that stretch reads RVGGRFTGKT…FLAMLGVCRT (82 aa).

Belongs to the NAD-dependent DNA ligase family. LigA subfamily. Requires Mg(2+) as cofactor. It depends on Mn(2+) as a cofactor.

The enzyme catalyses NAD(+) + (deoxyribonucleotide)n-3'-hydroxyl + 5'-phospho-(deoxyribonucleotide)m = (deoxyribonucleotide)n+m + AMP + beta-nicotinamide D-nucleotide.. Functionally, DNA ligase that catalyzes the formation of phosphodiester linkages between 5'-phosphoryl and 3'-hydroxyl groups in double-stranded DNA using NAD as a coenzyme and as the energy source for the reaction. It is essential for DNA replication and repair of damaged DNA. The protein is DNA ligase of Geotalea uraniireducens (strain Rf4) (Geobacter uraniireducens).